A 125-amino-acid polypeptide reads, in one-letter code: Large ribosomal subunit protein uL22 (125 aa).

It belongs to the universal ribosomal protein uL22 family. Part of the 50S ribosomal subunit.

This protein binds specifically to 23S rRNA; its binding is stimulated by other ribosomal proteins, e.g. L4, L17, and L20. It is important during the early stages of 50S assembly. It makes multiple contacts with different domains of the 23S rRNA in the assembled 50S subunit and ribosome. Functionally, the globular domain of the protein is located near the polypeptide exit tunnel on the outside of the subunit, while an extended beta-hairpin is found that lines the wall of the exit tunnel in the center of the 70S ribosome. In Novosphingobium aromaticivorans (strain ATCC 700278 / DSM 12444 / CCUG 56034 / CIP 105152 / NBRC 16084 / F199), this protein is Large ribosomal subunit protein uL22.